Here is a 385-residue protein sequence, read N- to C-terminus: Acetate kinase (385 aa).

Asparagine 9 contributes to the Mg(2+) binding site. Residue lysine 16 participates in ATP binding. Residue arginine 75 coordinates substrate. The Proton donor/acceptor role is filled by aspartate 132. ATP is bound by residues 192 to 196 (HLGNG), 266 to 268 (DFR), and 314 to 318 (GIGEN). Position 368 (glutamate 368) interacts with Mg(2+).

This sequence belongs to the acetokinase family. Homodimer. The cofactor is Mg(2+). Requires Mn(2+) as cofactor.

It is found in the cytoplasm. The enzyme catalyses acetate + ATP = acetyl phosphate + ADP. Its pathway is metabolic intermediate biosynthesis; acetyl-CoA biosynthesis; acetyl-CoA from acetate: step 1/2. Catalyzes the formation of acetyl phosphate from acetate and ATP. Can also catalyze the reverse reaction. The protein is Acetate kinase of Mycobacterium bovis (strain ATCC BAA-935 / AF2122/97).